Here is a 370-residue protein sequence, read N- to C-terminus: Anhydro-N-acetylmuramic acid kinase (370 aa).

An ATP-binding site is contributed by 12-19 (GTSLDGVD).

It belongs to the anhydro-N-acetylmuramic acid kinase family.

It carries out the reaction 1,6-anhydro-N-acetyl-beta-muramate + ATP + H2O = N-acetyl-D-muramate 6-phosphate + ADP + H(+). Its pathway is amino-sugar metabolism; 1,6-anhydro-N-acetylmuramate degradation. It functions in the pathway cell wall biogenesis; peptidoglycan recycling. Its function is as follows. Catalyzes the specific phosphorylation of 1,6-anhydro-N-acetylmuramic acid (anhMurNAc) with the simultaneous cleavage of the 1,6-anhydro ring, generating MurNAc-6-P. Is required for the utilization of anhMurNAc either imported from the medium or derived from its own cell wall murein, and thus plays a role in cell wall recycling. In Yersinia pseudotuberculosis serotype O:1b (strain IP 31758), this protein is Anhydro-N-acetylmuramic acid kinase.